A 214-amino-acid chain; its full sequence is MALRPLSKIDQLLLGVDKALRAVVPHSNPSTRPLPVSSDEIPELSITESRHVAGLMRINHTGEVCAQGLYHGQAFTAKDENVKQAMQQSAEEEVDHLVWCETRLSELGSHPSVFTPLWYGMSFGLGAVAGAISNDFSLGFVAETEAQVSEHLQDHIGQLPPQDQRSKEILAQMDSEELHHRELALANGGAALSPPIRHTMRWMANRMKATAYHL.

Residues E63, E93, H96, E145, E177, and H180 each coordinate Fe cation.

The protein belongs to the COQ7 family. Requires Fe cation as cofactor.

Its subcellular location is the cell membrane. It catalyses the reaction a 5-methoxy-2-methyl-3-(all-trans-polyprenyl)benzene-1,4-diol + AH2 + O2 = a 3-demethylubiquinol + A + H2O. The protein operates within cofactor biosynthesis; ubiquinone biosynthesis. Its function is as follows. Catalyzes the hydroxylation of 2-nonaprenyl-3-methyl-6-methoxy-1,4-benzoquinol during ubiquinone biosynthesis. The sequence is that of 3-demethoxyubiquinol 3-hydroxylase from Psychrobacter arcticus (strain DSM 17307 / VKM B-2377 / 273-4).